The primary structure comprises 231 residues: Modulator of macroautophagy TMEM150B-B (231 aa).

A topological domain (cytoplasmic) is located at residue Met1. A helical transmembrane segment spans residues 2–22 (WAWALLPICLTVWATGGIWIV). Topologically, residues 23–50 (YAMSVSNGSVNLSDGFPYISVSGTYPPQ) are extracellular. N-linked (GlcNAc...) asparagine glycosylation is found at Asn29 and Asn33. Residues 51-71 (SCVFGQVLNVGAMLAVWISVI) traverse the membrane as a helical segment. Topologically, residues 72–83 (RFQQIRDYNCHS) are cytoplasmic. A helical membrane pass occupies residues 84 to 104 (VLNSVSLATGILCALGTSIVG). At 105-115 (NFQQSNQLQTH) the chain is on the extracellular side. Residues 116 to 136 (LAGAFLAFIIGNVYFWMQTAL) form a helical membrane-spanning segment. Residues 137–150 (TYMVKPKHGGCYIG) lie on the Cytoplasmic side of the membrane. Residues 151–171 (PIRFCLSIACTALIVAMAVFL) form a helical membrane-spanning segment. The Extracellular portion of the chain corresponds to 172–183 (KMNMKSVSAICE). A helical membrane pass occupies residues 184 to 204 (WIVAMILFLLYGLFAVDFWHL). At 205–231 (DGHFFHVKKRRTVIPNEMEVSTVTLSI) the chain is on the cytoplasmic side.

Belongs to the DRAM/TMEM150 family.

The protein resides in the cell membrane. Its subcellular location is the endosome membrane. It is found in the cytoplasmic vesicle. The protein localises to the autophagosome membrane. Modulator of macroautophagy that causes accumulation of autophagosomes under basal conditions and enhances autophagic flux. Represses cell death and promotes long-term clonogenic survival of cells grown in the absence of glucose in a macroautophagy-independent manner. May have some role in extracellular matrix engulfment or growth factor receptor recycling, both of which can modulate cell survival. This is Modulator of macroautophagy TMEM150B-B from Xenopus laevis (African clawed frog).